The chain runs to 202 residues: Small ribosomal subunit protein uS4c (202 aa).

The 64-residue stretch at 89–152 (MRLDNIIFRL…QSNTFINNCI (64 aa)) folds into the S4 RNA-binding domain.

The protein belongs to the universal ribosomal protein uS4 family. Part of the 30S ribosomal subunit. Contacts protein S5. The interaction surface between S4 and S5 is involved in control of translational fidelity.

The protein resides in the plastid. In terms of biological role, one of the primary rRNA binding proteins, it binds directly to 16S rRNA where it nucleates assembly of the body of the 30S subunit. Its function is as follows. With S5 and S12 plays an important role in translational accuracy. This is Small ribosomal subunit protein uS4c (rps4) from Epifagus virginiana (Beechdrops).